Consider the following 511-residue polypeptide: Exodeoxyribonuclease 7 large subunit (511 aa).

This sequence belongs to the XseA family. In terms of assembly, heterooligomer composed of large and small subunits.

It localises to the cytoplasm. It catalyses the reaction Exonucleolytic cleavage in either 5'- to 3'- or 3'- to 5'-direction to yield nucleoside 5'-phosphates.. Bidirectionally degrades single-stranded DNA into large acid-insoluble oligonucleotides, which are then degraded further into small acid-soluble oligonucleotides. This is Exodeoxyribonuclease 7 large subunit from Brucella abortus (strain S19).